Here is a 543-residue protein sequence, read N- to C-terminus: Probable protein kinase UbiB (543 aa).

Residues 123-501 form the Protein kinase domain; sequence DFDSQALASA…QQRQGQSRYL (379 aa). ATP-binding positions include 129–137 and Lys-152; that span reads LASASIAQV. The active-site Proton acceptor is the Asp-287. Residues 517–539 form a helical membrane-spanning segment; that stretch reads LADATEVSTGFIVAGALAWFIGW.

Belongs to the ABC1 family. UbiB subfamily.

The protein localises to the cell inner membrane. Its pathway is cofactor biosynthesis; ubiquinone biosynthesis [regulation]. Is probably a protein kinase regulator of UbiI activity which is involved in aerobic coenzyme Q (ubiquinone) biosynthesis. The chain is Probable protein kinase UbiB from Yersinia pseudotuberculosis serotype O:1b (strain IP 31758).